The primary structure comprises 96 residues: Defensin-like protein 69 (96 aa).

Positions 1 to 19 (MGSSKLLVAFTLIVMMTIS) are cleaved as a signal peptide. Disulfide bonds link Cys-37/Cys-86, Cys-41/Cys-64, Cys-50/Cys-84, and Cys-54/Cys-85.

It belongs to the DEFL family.

Its subcellular location is the secreted. The chain is Defensin-like protein 69 from Arabidopsis thaliana (Mouse-ear cress).